A 501-amino-acid polypeptide reads, in one-letter code: Cytochrome P450 7A1 (501 aa).

Residues 4–24 (IFWIWGICLSVCCCLWLILGL) traverse the membrane as a helical segment. A heme-binding site is contributed by Cys-441.

The protein belongs to the cytochrome P450 family. It depends on heme as a cofactor. In terms of tissue distribution, detected in liver.

The protein localises to the endoplasmic reticulum membrane. Its subcellular location is the microsome membrane. It catalyses the reaction cholesterol + reduced [NADPH--hemoprotein reductase] + O2 = 7alpha-hydroxycholesterol + oxidized [NADPH--hemoprotein reductase] + H2O + H(+). It carries out the reaction 4beta-hydroxycholesterol + reduced [NADPH--hemoprotein reductase] + O2 = 4beta,7alpha-dihydroxycholesterol + oxidized [NADPH--hemoprotein reductase] + H2O + H(+). The enzyme catalyses lathosterol + reduced [NADPH--hemoprotein reductase] + O2 = 7alpha,8alpha-epoxy-5alpha-cholestan-3beta-ol + oxidized [NADPH--hemoprotein reductase] + H2O + H(+). The catalysed reaction is lathosterol + reduced [NADPH--hemoprotein reductase] + O2 = 5alpha-cholestan-7-oxo-3beta-ol + oxidized [NADPH--hemoprotein reductase] + H2O + H(+). It catalyses the reaction 7-dehydrocholesterol + reduced [NADPH--hemoprotein reductase] + O2 = 7-oxocholesterol + oxidized [NADPH--hemoprotein reductase] + H2O + H(+). It carries out the reaction (24S)-hydroxycholesterol + reduced [NADPH--hemoprotein reductase] + O2 = (24S)-7alpha-dihydroxycholesterol + oxidized [NADPH--hemoprotein reductase] + H2O + H(+). The enzyme catalyses (24R)-hydroxycholesterol + reduced [NADPH--hemoprotein reductase] + O2 = (24R)-7alpha-dihydroxycholesterol + oxidized [NADPH--hemoprotein reductase] + H2O + H(+). Its pathway is lipid metabolism; bile acid biosynthesis. The protein operates within steroid metabolism; cholesterol degradation. Its function is as follows. A cytochrome P450 monooxygenase involved in the metabolism of endogenous cholesterol and its oxygenated derivatives (oxysterols). Mechanistically, uses molecular oxygen inserting one oxygen atom into a substrate, and reducing the second into a water molecule, with two electrons provided by NADPH via cytochrome P450 reductase (CPR; NADPH-ferrihemoprotein reductase). Functions as a critical regulatory enzyme of bile acid biosynthesis and cholesterol homeostasis. Catalyzes the hydroxylation of carbon hydrogen bond at 7-alpha position of cholesterol, a rate-limiting step in cholesterol catabolism and bile acid biosynthesis. 7-alpha hydroxylates several oxysterols, including 4beta-hydroxycholesterol and 24-hydroxycholesterol. Catalyzes the oxidation of the 7,8 double bond of 7-dehydrocholesterol and lathosterol with direct and predominant formation of the 7-keto derivatives. This is Cytochrome P450 7A1 (CYP7A1) from Oryctolagus cuniculus (Rabbit).